Reading from the N-terminus, the 547-residue chain is Chaperonin GroEL (547 aa).

ATP contacts are provided by residues 30-33 (TLGP), Lys51, 87-91 (DGTTT), Gly415, and Asp495. The disordered stretch occupies residues 526-547 (QDATPTASPDMGGMGGMGGGMM). Residues 537–547 (GGMGGMGGGMM) show a composition bias toward gly residues.

The protein belongs to the chaperonin (HSP60) family. As to quaternary structure, forms a cylinder of 14 subunits composed of two heptameric rings stacked back-to-back. Interacts with the co-chaperonin GroES.

The protein localises to the cytoplasm. It carries out the reaction ATP + H2O + a folded polypeptide = ADP + phosphate + an unfolded polypeptide.. Together with its co-chaperonin GroES, plays an essential role in assisting protein folding. The GroEL-GroES system forms a nano-cage that allows encapsulation of the non-native substrate proteins and provides a physical environment optimized to promote and accelerate protein folding. This chain is Chaperonin GroEL, found in Vesicomyosocius okutanii subsp. Calyptogena okutanii (strain HA).